Consider the following 497-residue polypeptide: Methionine--tRNA ligase (497 aa).

A 'HIGH' region motif is present at residues 14–24; it reads YYVNDVPHLGH. Positions 129, 132, 147, and 150 each coordinate Zn(2+). Residues 295–299 carry the 'KMSKS' region motif; that stretch reads KMSKT. K298 contacts ATP.

The protein belongs to the class-I aminoacyl-tRNA synthetase family. MetG type 2A subfamily. In terms of assembly, monomer. Zn(2+) is required as a cofactor.

It is found in the cytoplasm. It catalyses the reaction tRNA(Met) + L-methionine + ATP = L-methionyl-tRNA(Met) + AMP + diphosphate. Is required not only for elongation of protein synthesis but also for the initiation of all mRNA translation through initiator tRNA(fMet) aminoacylation. This Aquifex aeolicus (strain VF5) protein is Methionine--tRNA ligase (metG).